A 570-amino-acid polypeptide reads, in one-letter code: Phytoene desaturase (570 aa).

The chain crosses the membrane as a helical span at residues 547–567 (LFQGFLGALVAILLAYYYLVI).

Belongs to the carotenoid/retinoid oxidoreductase family. The cofactor is NAD(+).

It is found in the membrane. It catalyses the reaction 15-cis-phytoene + A = all-trans-phytofluene + AH2. The catalysed reaction is all-trans-phytofluene + A = all-trans-zeta-carotene + AH2. The enzyme catalyses all-trans-zeta-carotene + A = all-trans-neurosporene + AH2. It carries out the reaction all-trans-neurosporene + A = all-trans-lycopene + AH2. The protein operates within carotenoid biosynthesis. Phytoene desaturase; part of the car gene cluster that mediates the biosynthesis of neurosporaxanthin, a carboxylic apocarotenoid acting as an essential protective pigments and leading to orange pigmentation. Converts phytoene into lycopene via the intermediates phytofluene, zeta-carotene and neurosporene; and further desaturates gamma-carotene into torulene. Neurosporaxanthin is synthesized from geranyl-geranyl pyrophosphate (GGPP) through several enzymatic activities. Phytoene synthase activity performed by the bifunctional enzyme carAR first produces phytoene from geranyl-geranyl pyrophosphate (GGPP). The phytoene dehydrogenase carB then introduces 4 desaturations to lead to lycopene which is substrate of the carotene cyclase activity of carAR that leads to the production of gamma-carotene. CarB then performs a 5th desaturation reaction to yield torulene. Torulene is the substrate of the dioxidase carT that breaks the molecule, removing five carbon atoms to yield beta-apo-4'-carotenal, whereas the aldehyde dehydrogenase carD mediates the last step by converting beta-apo-4'-carotenal into neurosporaxanthin. This Fusarium fujikuroi (Bakanae and foot rot disease fungus) protein is Phytoene desaturase.